Here is a 306-residue protein sequence, read N- to C-terminus: Cell division protein ZipA (306 aa).

Residues 1-6 lie on the Periplasmic side of the membrane; it reads MENLQL. A helical transmembrane segment spans residues 7–27; the sequence is VLLLIGAIAIIAVLVHGFWSI. Residues 28-306 lie on the Cytoplasmic side of the membrane; it reads RKQQPKGYKQ…NYIQRIRAQA (279 aa).

It belongs to the ZipA family. In terms of assembly, interacts with FtsZ via their C-terminal domains.

The protein localises to the cell inner membrane. Functionally, essential cell division protein that stabilizes the FtsZ protofilaments by cross-linking them and that serves as a cytoplasmic membrane anchor for the Z ring. Also required for the recruitment to the septal ring of downstream cell division proteins. The sequence is that of Cell division protein ZipA from Shewanella halifaxensis (strain HAW-EB4).